A 321-amino-acid chain; its full sequence is DNA-directed RNA polymerase subunit alpha (321 aa).

The alpha N-terminal domain (alpha-NTD) stretch occupies residues 1–235 (MAYQIECLET…DLFSPLKEVP (235 aa)). An alpha C-terminal domain (alpha-CTD) region spans residues 252-321 (QIPIEQLNLS…TLPPQKAARN (70 aa)).

The protein belongs to the RNA polymerase alpha chain family. Homodimer. In cyanobacteria the RNAP catalytic core is composed of 2 alpha, 1 beta, 1 beta', 1 gamma and 1 omega subunit. When a sigma factor is associated with the core the holoenzyme is formed, which can initiate transcription.

It carries out the reaction RNA(n) + a ribonucleoside 5'-triphosphate = RNA(n+1) + diphosphate. Its function is as follows. DNA-dependent RNA polymerase catalyzes the transcription of DNA into RNA using the four ribonucleoside triphosphates as substrates. The polypeptide is DNA-directed RNA polymerase subunit alpha (Thermosynechococcus vestitus (strain NIES-2133 / IAM M-273 / BP-1)).